The primary structure comprises 862 residues: Valine--tRNA ligase (862 aa).

Positions 43 to 53 (PNVTGSLHMGH) match the 'HIGH' region motif. Zn(2+) is bound by residues Cys-176, Cys-179, Cys-344, Cys-347, Cys-417, Cys-420, Cys-438, and Cys-441. A 'KMSKS' region motif is present at residues 528–532 (KMSKS). Residue Lys-531 participates in ATP binding. Residues 802–862 (RRRQEKRLKE…RIREALSQIG (61 aa)) adopt a coiled-coil conformation.

Belongs to the class-I aminoacyl-tRNA synthetase family. ValS type 1 subfamily. Monomer. Zn(2+) serves as cofactor.

It localises to the cytoplasm. The catalysed reaction is tRNA(Val) + L-valine + ATP = L-valyl-tRNA(Val) + AMP + diphosphate. Functionally, catalyzes the attachment of valine to tRNA(Val). As ValRS can inadvertently accommodate and process structurally similar amino acids such as threonine, to avoid such errors, it has a 'posttransfer' editing activity that hydrolyzes mischarged Thr-tRNA(Val) in a tRNA-dependent manner. The sequence is that of Valine--tRNA ligase from Thermus thermophilus (strain ATCC BAA-163 / DSM 7039 / HB27).